The sequence spans 310 residues: Oxygen-dependent coproporphyrinogen-III oxidase (310 aa).

Serine 93 is a substrate binding site. A divalent metal cation-binding residues include histidine 97 and histidine 107. The active-site Proton donor is the histidine 107. 109–111 (NVR) lines the substrate pocket. Positions 146 and 176 each coordinate a divalent metal cation. An important for dimerization region spans residues 241 to 276 (YVEFNLVYDRGTLFGLQSGGRTESILMSLPPQVRWS). 259-261 (GGR) serves as a coordination point for substrate.

Belongs to the aerobic coproporphyrinogen-III oxidase family. Homodimer. A divalent metal cation is required as a cofactor.

The protein localises to the cytoplasm. It carries out the reaction coproporphyrinogen III + O2 + 2 H(+) = protoporphyrinogen IX + 2 CO2 + 2 H2O. Its pathway is porphyrin-containing compound metabolism; protoporphyrin-IX biosynthesis; protoporphyrinogen-IX from coproporphyrinogen-III (O2 route): step 1/1. Functionally, involved in the heme biosynthesis. Catalyzes the aerobic oxidative decarboxylation of propionate groups of rings A and B of coproporphyrinogen-III to yield the vinyl groups in protoporphyrinogen-IX. This Pseudomonas fluorescens (strain SBW25) protein is Oxygen-dependent coproporphyrinogen-III oxidase.